Consider the following 342-residue polypeptide: (Lyso)-N-acylphosphatidylethanolamine lipase (342 aa).

The AB hydrolase-1 domain maps to Pro-70 to Ser-201.

This sequence belongs to the peptidase S33 family. ABHD4/ABHD5 subfamily.

It carries out the reaction N-hexadecanoyl-1,2-di-(9Z-octadecenoyl)-sn-glycero-3-phosphoethanolamine + H2O = N-hexadecanoyl-1-(9Z-octadecenoyl)-sn-glycero-3-phosphoethanolamine + (9Z)-octadecenoate + H(+). It catalyses the reaction an N-acyl-1,2-diacyl-sn-glycero-3-phosphoethanolamine + H2O = N,1-diacyl-sn-glycero-3-phosphoethanolamine + a fatty acid + H(+). The catalysed reaction is N-hexadecanoyl-1-(9Z-octadecenoyl)-sn-glycero-3-phosphoethanolamine + H2O = N-hexadecanoyl-sn-glycero-3-phosphoethanolamine + (9Z)-octadecenoate + H(+). The enzyme catalyses N-octadecanoyl-1-(9Z-octadecenoyl)-sn-glycero-3-phosphoethanolamine + H2O = N-octadecanoyl-sn-glycero-3-phospho-ethanolamine + (9Z)-octadecenoate + H(+). It carries out the reaction N-eicosanoyl-1-(9Z-octadecenoyl)-sn-glycero-3-phosphoethanolamine + H2O = N-eicosanoyl-sn-glycero-3-phosphoethanolamine + (9Z)-octadecenoate + H(+). It catalyses the reaction N,1-di-(9Z-octadecenoyl)-sn-glycero-3-phosphoethanolamine + H2O = N-(9Z-octadecenoyl)-sn-glycero-3-phosphoethanolamine + (9Z)-octadecenoate + H(+). The catalysed reaction is N-(5Z,8Z,11Z,14Z-eicosatetraenoyl)-1-(9Z-octadecenoyl)-sn-glycero-3-phosphoethanolamine + H2O = N-(5Z,8Z,11Z,14Z-eicosatetraenoyl)-sn-glycero-3-phosphoethanolamine + (9Z)-octadecenoate + H(+). The enzyme catalyses 1-octadecanoyl-2-(9Z-octadecenoyl)-sn-glycero-3-phospho-(N-hexadecanoyl)-serine + H2O = 1-octadecanoyl-2-hydroxy-sn-glycero-3-phospho-(N-hexadecanoyl)-serine + (9Z)-octadecenoate + H(+). It carries out the reaction 1-O-(1Z-octadecenoyl)-2-(9Z-octadecenoyl)-sn-glycero-3-phospho-N-hexadecanoyl-ethanolamine + H2O = 1-O-(1Z-octadecenyl)-sn-glycero-3-phospho-N-hexadecanoyl-ethanolamine + (9Z)-octadecenoate + H(+). It catalyses the reaction N,1-diacyl-sn-glycero-3-phosphoethanolamine + H2O = N-acyl-sn-glycero-3-phosphoethanolamine + a fatty acid + H(+). In terms of biological role, lysophospholipase selective for N-acyl phosphatidylethanolamine (NAPE). Contributes to the biosynthesis of N-acyl ethanolamines, including the endocannabinoid anandamide by hydrolyzing the sn-1 and sn-2 acyl chains from N-acyl phosphatidylethanolamine (NAPE) generating glycerophospho-N-acyl ethanolamine (GP-NAE), an intermediate for N-acyl ethanolamine biosynthesis. Hydrolyzes substrates bearing saturated, monounsaturated, polyunsaturated N-acyl chains. Shows no significant activity towards other lysophospholipids, including lysophosphatidylcholine, lysophosphatidylethanolamine and lysophosphatidylserine. In Homo sapiens (Human), this protein is (Lyso)-N-acylphosphatidylethanolamine lipase.